Reading from the N-terminus, the 1270-residue chain is Microtubule-associated tumor suppressor 1 homolog (1270 aa).

Residues 1–14 (MTDDNSDDKIEDEL) show a composition bias toward acidic residues. Disordered stretches follow at residues 1 to 50 (MTDD…NSAN), 183 to 217 (SFHT…DKMH), and 374 to 402 (TEDT…SPPG). The segment covering 39 to 50 (SSASSVNWNSAN) has biased composition (low complexity). Thr186 carries the post-translational modification Phosphothreonine. Positions 200–211 (TSSLSYSTWTSS) are enriched in low complexity. 3 positions are modified to phosphoserine: Ser386, Ser399, and Ser443. Residues 386–396 (SGTQNHTSELI) are compositionally biased toward polar residues. Disordered stretches follow at residues 524 to 558 (DAAL…RTPR) and 592 to 622 (THSK…SSSN). A compositionally biased stretch (low complexity) spans 538-547 (SASSPSSAIS). Ser629 carries the phosphoserine modification. 3 stretches are compositionally biased toward polar residues: residues 701-710 (SKTTTTSGRN), 759-776 (VSSS…SSWV), and 797-816 (TGST…YSNN). The disordered stretch occupies residues 701-816 (SKTTTTSGRN…HSELSTYSNN (116 aa)). Positions 940–1231 (IQHLLSEREE…RLSMENEELL (292 aa)) form a coiled coil. 8 positions are modified to phosphoserine: Ser1203, Ser1224, Ser1245, Ser1255, Ser1259, Ser1261, Ser1264, and Ser1268. Residues 1237 to 1270 (GDLCSPKRSPTSSAIPFQSPRNSGSFPSPSISPR) are disordered. The segment covering 1244–1270 (RSPTSSAIPFQSPRNSGSFPSPSISPR) has biased composition (polar residues).

The protein belongs to the MTUS1 family. As to quaternary structure, homodimer. Interacts with AGTR2. Interacts with PTPN6. Associates with microtubules.

Its subcellular location is the mitochondrion. It is found in the golgi apparatus. It localises to the cell membrane. The protein resides in the nucleus. Cooperates with AGTR2 to inhibit ERK2 activation and cell proliferation. May be required for AGTR2 cell surface expression. Together with PTPN6, induces UBE2V2 expression upon angiotensin-II stimulation. The sequence is that of Microtubule-associated tumor suppressor 1 homolog (MTUS1) from Pongo abelii (Sumatran orangutan).